Reading from the N-terminus, the 228-residue chain is Archaeal flagellar ATP-binding protein FlaH (228 aa).

Positions 30, 31, 33, 34, 35, 57, and 191 each coordinate ATP. S34 lines the Mg(2+) pocket. E57 is a Mg(2+) binding site.

This sequence belongs to the FlaH family. As to quaternary structure, the S.acidocaldarius archaellum assembly machinery and its filament consist of seven proteins (FlaB, FlaF, FlaG, FlaH, FlaI, FlaJ and FlaX). Interacts directly with the FlaX ring and the motor ATPase FlaI. Monomers, which can probably form homohexamers upon binding to ATP. In vitro, FlaH assembles as a second ring inside the FlaX ring.

It is found in the archaeal flagellum. Its subcellular location is the cytoplasm. Its function is as follows. Component of the archaellum. FlaX, FlaH and FlaI form the core cytoplasmic motor complex of the crenarchaeal archaellum. FlaH binds ATP with high affinity but lacks detectable in vitro ATPase activity. ATP binding is essential for interaction with FlaI and for archaellum assembly. This Sulfolobus acidocaldarius (strain ATCC 33909 / DSM 639 / JCM 8929 / NBRC 15157 / NCIMB 11770) protein is Archaeal flagellar ATP-binding protein FlaH.